Reading from the N-terminus, the 682-residue chain is Potassium-transporting ATPase ATP-binding subunit (682 aa).

4 consecutive transmembrane segments (helical) span residues 34–54 (PVMF…IAMA), 62–82 (ALFS…ANFA), 219–239 (IALT…TATL), and 254–274 (VLVA…LSAI). Residue aspartate 307 is the 4-aspartylphosphate intermediate of the active site. Residues aspartate 344, glutamate 348, 377–384 (FTAQSRMS), and lysine 395 contribute to the ATP site. The Mg(2+) site is built by aspartate 518 and aspartate 522. Helical transmembrane passes span 588-608 (FAII…LNIM), 616-636 (AILS…PLAL), and 656-676 (IYGL…DLLL).

It belongs to the cation transport ATPase (P-type) (TC 3.A.3) family. Type IA subfamily. The system is composed of three essential subunits: KdpA, KdpB and KdpC.

The protein resides in the cell inner membrane. It catalyses the reaction K(+)(out) + ATP + H2O = K(+)(in) + ADP + phosphate + H(+). In terms of biological role, part of the high-affinity ATP-driven potassium transport (or Kdp) system, which catalyzes the hydrolysis of ATP coupled with the electrogenic transport of potassium into the cytoplasm. This subunit is responsible for energy coupling to the transport system and for the release of the potassium ions to the cytoplasm. The sequence is that of Potassium-transporting ATPase ATP-binding subunit from Escherichia coli O139:H28 (strain E24377A / ETEC).